The following is a 131-amino-acid chain: Leptin receptor gene-related protein (131 aa).

Transmembrane regions (helical) follow at residues Leu7–Leu27, Val32–Ala52, Leu69–Ala89, and Gly100–Phe120.

It belongs to the OB-RGRP/VPS55 family. Interacts with LEPR. Interacts with RAB13.

Its subcellular location is the golgi apparatus membrane. It localises to the endosome membrane. Functionally, negatively regulates leptin receptor (LEPR) cell surface expression, and thus decreases response to leptin/LEP. Negatively regulates growth hormone (GH) receptor cell surface expression in liver. May play a role in liver resistance to GH during periods of reduced nutrient availability. The sequence is that of Leptin receptor gene-related protein (LEPROT) from Sus scrofa (Pig).